Consider the following 240-residue polypeptide: EF-hand domain-containing protein D1 (240 aa).

The segment at 17-54 (EVRAETDQGDPQPAPCDAPAGHPEPEPPARAPTASADS) is disordered. EF-hand domains are found at residues 91–126 (RLLK…LGAP) and 127–162 (QTHL…AAAG). Positions 104, 108, 115, 140, 142, 144, 146, and 151 each coordinate Ca(2+).

In terms of tissue distribution, widely expressed. Highest expression in testis, followed by ovary, kidney, cerebrum, cerebellum, heart, liver, and spleen. In the cerebrum and cerebellum, undetectable at embryonic stages, expression increases after birth up to adult stage. In adult CNS, detected in neurons of the cerebellum, cerebrum and hippocampus formation, including dentate gyrus and Cornu Ammonis, but not in the white matter. In the testis, expressed in spermatocytes, but not in spermatogonia nor in interstitial cells. In ovary, found predominantly in mural granulosa cells and those of the cumulus oophorus. In kidney, expressed in collecting ducts, but not in glomeruli. Not detected in skeletal muscle.

The protein resides in the mitochondrion inner membrane. Its function is as follows. Acts as a calcium sensor for mitochondrial flash (mitoflash) activation, an event characterized by stochastic bursts of superoxide production. May play a role in neuronal differentiation. The chain is EF-hand domain-containing protein D1 (Efhd1) from Mus musculus (Mouse).